We begin with the raw amino-acid sequence, 29 residues long: Potassium channel toxin alpha-KTx 20.1 (29 aa).

3 cysteine pairs are disulfide-bonded: cysteine 2–cysteine 20, cysteine 7–cysteine 24, and cysteine 11–cysteine 26.

Belongs to the short scorpion toxin superfamily. Potassium channel inhibitor family. Alpha-KTx 20 subfamily. As to expression, expressed by the venom gland.

The protein localises to the secreted. Functionally, reduces potassium currents through Kv1.2/KCNA2 and Kv1.3/KCNA3 voltage-gated potassium channels. This is Potassium channel toxin alpha-KTx 20.1 from Tityus trivittatus (Argentinean scorpion).